A 977-amino-acid chain; its full sequence is Monofunctional C1-tetrahydrofolate synthase, mitochondrial (977 aa).

A mitochondrion-targeting transit peptide spans 1 to 31 (MSVRLPLLLRQLGRQQLPSGPACRLRELCRS). The disordered stretch occupies residues 29–71 (CRSGSRSSSSGGGDPEGLRGRRLQDGQTFSSHGPGNPEAPGMD). The tract at residues 32–347 (GSRSSSSGGG…REQQHRRWRL (316 aa)) is methylenetetrahydrofolate dehydrogenase and cyclohydrolase. An N6-acetyllysine; alternate modification is found at Lys188. Lys188 is modified (N6-succinyllysine; alternate). Residues 348-977 (HCLKLQPLSP…TETEQVKGLF (630 aa)) are formyltetrahydrofolate synthetase. At Ser356 the chain carries Phosphoserine. 422 to 429 (TPLGEGKS) contributes to the ATP binding site. Lys595 carries the post-translational modification N6-succinyllysine.

The protein in the N-terminal section; belongs to the tetrahydrofolate dehydrogenase/cyclohydrolase family. This sequence in the C-terminal section; belongs to the formate--tetrahydrofolate ligase family. As to quaternary structure, homodimer.

Its subcellular location is the mitochondrion. It carries out the reaction (6S)-5,6,7,8-tetrahydrofolate + formate + ATP = (6R)-10-formyltetrahydrofolate + ADP + phosphate. Its pathway is one-carbon metabolism; tetrahydrofolate interconversion. May provide the missing metabolic reaction required to link the mitochondria and the cytoplasm in the mammalian model of one-carbon folate metabolism complementing thus the enzymatic activities of MTHFD2. The protein is Monofunctional C1-tetrahydrofolate synthase, mitochondrial (Mthfd1l) of Mus musculus (Mouse).